We begin with the raw amino-acid sequence, 807 residues long: Glycerol-3-phosphate acyltransferase (807 aa).

The short motif at 305–310 is the HXXXXD motif element; that stretch reads CHRSHM.

The protein belongs to the GPAT/DAPAT family.

The protein resides in the cell inner membrane. The enzyme catalyses sn-glycerol 3-phosphate + an acyl-CoA = a 1-acyl-sn-glycero-3-phosphate + CoA. It functions in the pathway phospholipid metabolism; CDP-diacylglycerol biosynthesis; CDP-diacylglycerol from sn-glycerol 3-phosphate: step 1/3. The polypeptide is Glycerol-3-phosphate acyltransferase (Klebsiella pneumoniae (strain 342)).